The primary structure comprises 292 residues: Formamidopyrimidine-DNA glycosylase (292 aa).

Pro2 functions as the Schiff-base intermediate with DNA in the catalytic mechanism. Residue Glu3 is the Proton donor of the active site. The Proton donor; for beta-elimination activity role is filled by Lys61. Positions 103, 122, and 168 each coordinate DNA. Residues 254 to 288 form an FPG-type zinc finger; that stretch reads DAYGREGEHCRRCGAVMRREKFMNRSSFYCPRCQP. Catalysis depends on Arg278, which acts as the Proton donor; for delta-elimination activity.

Belongs to the FPG family. In terms of assembly, monomer. Zn(2+) is required as a cofactor.

It carries out the reaction Hydrolysis of DNA containing ring-opened 7-methylguanine residues, releasing 2,6-diamino-4-hydroxy-5-(N-methyl)formamidopyrimidine.. It catalyses the reaction 2'-deoxyribonucleotide-(2'-deoxyribose 5'-phosphate)-2'-deoxyribonucleotide-DNA = a 3'-end 2'-deoxyribonucleotide-(2,3-dehydro-2,3-deoxyribose 5'-phosphate)-DNA + a 5'-end 5'-phospho-2'-deoxyribonucleoside-DNA + H(+). Its function is as follows. Involved in base excision repair of DNA damaged by oxidation or by mutagenic agents. Acts as a DNA glycosylase that recognizes and removes damaged bases. Has a preference for oxidized purines, such as 7,8-dihydro-8-oxoguanine (8-oxoG). Has AP (apurinic/apyrimidinic) lyase activity and introduces nicks in the DNA strand. Cleaves the DNA backbone by beta-delta elimination to generate a single-strand break at the site of the removed base with both 3'- and 5'-phosphates. This is Formamidopyrimidine-DNA glycosylase from Mycobacterium ulcerans (strain Agy99).